The following is a 709-amino-acid chain: F-box only protein 40 (709 aa).

The TRAF-type zinc-finger motif lies at 53–112; sequence EHQLLCPLEQVPCLNSEYGCPLSMSRHKLAKHLQVCPASVVCCSMEWNRWPNVDSETTLH. The interval 232 to 280 is disordered; it reads TNSSASCESKNKNDSEKEQISSGHNMVEGEGAPKKKEPQENQKQQDVRT. Basic and acidic residues-rich tracts occupy residues 240–250 and 262–277; these read SKNKNDSEKEQ and GAPKKKEPQENQKQQD. One can recognise an F-box domain in the interval 570-624; it reads QNSLTSLPLEILKYIAGFLDSVSLAQLSQVSVLMRNICATLLQERGMVLLQWKKK.

Directly interacts with SKP1 and CUL1. In terms of tissue distribution, expressed only in heart and skeletal muscle.

The protein localises to the cytoplasm. Functionally, probable substrate-recognition component of the SCF (SKP1-CUL1-F-box protein)-type E3 ubiquitin ligase complex that may function in myogenesis. In Homo sapiens (Human), this protein is F-box only protein 40 (FBXO40).